The primary structure comprises 260 residues: UPF0246 protein Cbei_1739 (260 aa).

Belongs to the UPF0246 family.

The chain is UPF0246 protein Cbei_1739 from Clostridium beijerinckii (strain ATCC 51743 / NCIMB 8052) (Clostridium acetobutylicum).